Here is a 354-residue protein sequence, read N- to C-terminus: Green-sensitive opsin-3 (354 aa).

The Extracellular portion of the chain corresponds to 1 to 39; sequence MSGLNGFEGDNFYIPMSNRTGLVRDPFVYEQYYLAEPWQ. Asparagine 18 is a glycosylation site (N-linked (GlcNAc...) asparagine). The helical transmembrane segment at 40-64 threads the bilayer; sequence FKLLACYMFFLICLGLPINGFTLFV. Residues 65-76 lie on the Cytoplasmic side of the membrane; it reads TAQHKKLQQPLN. The chain crosses the membrane as a helical span at residues 77-102; the sequence is FILVNLAVAGMIMVCFGFTITISSAV. Residues 103–116 lie on the Extracellular side of the membrane; that stretch reads NGYFYFGPTACAIE. Cysteine 113 and cysteine 190 are joined by a disulfide. A helical transmembrane segment spans residues 117–136; it reads GFMATLGGEVALWSLVVLAI. The Cytoplasmic segment spans residues 137–155; the sequence is ERYIVVCKPMGSFKFSASH. The chain crosses the membrane as a helical span at residues 156–179; that stretch reads ALGGIGFTWFMAMTCAAPPLVGWS. Topologically, residues 180–205 are extracellular; the sequence is RYIPEGLQCSCGPDYYTLNPKYNNES. An N-linked (GlcNAc...) asparagine glycan is attached at asparagine 203. The chain crosses the membrane as a helical span at residues 206–233; it reads YVIYMFVVHFIVPVTVIFFTYGRLVCTV. At 234–255 the chain is on the cytoplasmic side; the sequence is KSAAAAQQDSASTQKAEKEVTR. The chain crosses the membrane as a helical span at residues 256–279; the sequence is MVILMVVGFLVAWTPYATVAAWIF. Residues 280-287 lie on the Extracellular side of the membrane; it reads FNKGAAFT. Residues 288 to 312 form a helical membrane-spanning segment; sequence AQFMAVPAFFSKSSALFNPIIYVLL. Lysine 299 carries the N6-(retinylidene)lysine modification. Topologically, residues 313–354 are cytoplasmic; sequence NKQFRNCMLTTLFCGKNPLGDEESSTVSTKTEVSTVSSVSPA.

This sequence belongs to the G-protein coupled receptor 1 family. Opsin subfamily. As to expression, the color pigments are found in the cone photoreceptor cells.

Its subcellular location is the membrane. Its function is as follows. Visual pigments are the light-absorbing molecules that mediate vision. They consist of an apoprotein, opsin, covalently linked to cis-retinal. The protein is Green-sensitive opsin-3 (RH11) of Psalidodon fasciatus (Banded astyanax).